Reading from the N-terminus, the 164-residue chain is Putative 4-hydroxy-4-methyl-2-oxoglutarate aldolase (164 aa).

Substrate is bound by residues 80–83 (GGNL) and R102. Residue D103 participates in a divalent metal cation binding.

This sequence belongs to the class II aldolase/RraA-like family. As to quaternary structure, homotrimer. A divalent metal cation serves as cofactor.

The enzyme catalyses 4-hydroxy-4-methyl-2-oxoglutarate = 2 pyruvate. The catalysed reaction is oxaloacetate + H(+) = pyruvate + CO2. Catalyzes the aldol cleavage of 4-hydroxy-4-methyl-2-oxoglutarate (HMG) into 2 molecules of pyruvate. Also contains a secondary oxaloacetate (OAA) decarboxylase activity due to the common pyruvate enolate transition state formed following C-C bond cleavage in the retro-aldol and decarboxylation reactions. In Paraburkholderia phytofirmans (strain DSM 17436 / LMG 22146 / PsJN) (Burkholderia phytofirmans), this protein is Putative 4-hydroxy-4-methyl-2-oxoglutarate aldolase.